We begin with the raw amino-acid sequence, 443 residues long: ATP-dependent protease ATPase subunit HslU (443 aa).

Residues Ile18, 60 to 65, Asp256, Glu321, and Arg393 each bind ATP; that span reads GVGKTE.

This sequence belongs to the ClpX chaperone family. HslU subfamily. A double ring-shaped homohexamer of HslV is capped on each side by a ring-shaped HslU homohexamer. The assembly of the HslU/HslV complex is dependent on binding of ATP.

The protein resides in the cytoplasm. ATPase subunit of a proteasome-like degradation complex; this subunit has chaperone activity. The binding of ATP and its subsequent hydrolysis by HslU are essential for unfolding of protein substrates subsequently hydrolyzed by HslV. HslU recognizes the N-terminal part of its protein substrates and unfolds these before they are guided to HslV for hydrolysis. The chain is ATP-dependent protease ATPase subunit HslU from Salmonella agona (strain SL483).